The primary structure comprises 384 residues: Probable E3 ubiquitin-protein ligase rnf113 (384 aa).

Positions 1 to 11 (MDLFRKPKKRN) are enriched in basic residues. The interval 1 to 96 (MDLFRKPKKR…GPSGPRDQGA (96 aa)) is disordered. Residues 42 to 52 (PMVQSTKQLDA) show a composition bias toward polar residues. Over residues 60 to 71 (SSDDSDDSDDNQ) the composition is skewed to acidic residues. A C3H1-type zinc finger spans residues 175-203 (DFAPDICKDYKETGFCTFGDSCKFVHDRS). Residues 241–279 (CFICGNPFVDPIVTKCKHYFCTGCALKSFQKSSKCPICQ) form an RING-type zinc finger. A disordered region spans residues 299–384 (KKQQQKQEAE…ESDDDDAEKD (86 aa)). 2 stretches are compositionally biased toward basic and acidic residues: residues 303-312 (QKQEAEKQEE) and 320-334 (EKPHECDDHHHHDHE). Over residues 351–384 (EKSDEEQEIMMEDVEGLEGGENDSESDDDDAEKD) the composition is skewed to acidic residues.

It catalyses the reaction S-ubiquitinyl-[E2 ubiquitin-conjugating enzyme]-L-cysteine + [acceptor protein]-L-lysine = [E2 ubiquitin-conjugating enzyme]-L-cysteine + N(6)-ubiquitinyl-[acceptor protein]-L-lysine.. It participates in protein modification; protein ubiquitination. In terms of biological role, may function as E3 ubiquitin-protein ligase that catalyzes the transfer of ubiquitin onto target proteins. May play a role in DNA repair via its role in the synthesis of 'Lys-63'-linked polyubiquitin chains that recruit proteins involved in repair to sites of DNA damage by alkylating agents. The chain is Probable E3 ubiquitin-protein ligase rnf113 (rnf-113) from Caenorhabditis elegans.